The sequence spans 247 residues: tRNA pseudouridine synthase A (247 aa).

The active-site Nucleophile is the aspartate 52. Position 113 (tyrosine 113) interacts with substrate.

The protein belongs to the tRNA pseudouridine synthase TruA family. As to quaternary structure, homodimer.

The enzyme catalyses uridine(38/39/40) in tRNA = pseudouridine(38/39/40) in tRNA. In terms of biological role, formation of pseudouridine at positions 38, 39 and 40 in the anticodon stem and loop of transfer RNAs. The sequence is that of tRNA pseudouridine synthase A from Bartonella tribocorum (strain CIP 105476 / IBS 506).